The following is a 718-amino-acid chain: Probable trehalose-phosphatase (718 aa).

The segment at 449 to 470 (LSMDQTGHKKVDAKKKPGIRKK) is disordered. Basic residues predominate over residues 459–470 (VDAKKKPGIRKK).

In the N-terminal section; belongs to the glycosyltransferase 20 family. It in the C-terminal section; belongs to the trehalose phosphatase family.

The catalysed reaction is alpha,alpha-trehalose 6-phosphate + H2O = alpha,alpha-trehalose + phosphate. The protein is Probable trehalose-phosphatase of Encephalitozoon cuniculi (strain GB-M1) (Microsporidian parasite).